Here is a 528-residue protein sequence, read N- to C-terminus: Phosphoenolpyruvate carboxykinase (ATP) (528 aa).

The substrate site is built by R56, Y192, and K198. Residues K198, H217, and 233 to 241 (GLSGTGKTT) contribute to the ATP site. Positions 198 and 217 each coordinate Mn(2+). D254 contributes to the Mn(2+) binding site. Positions 282, 319, and 444 each coordinate ATP. A substrate-binding site is contributed by R319.

The protein belongs to the phosphoenolpyruvate carboxykinase (ATP) family. It depends on Mn(2+) as a cofactor.

It is found in the cytoplasm. The catalysed reaction is oxaloacetate + ATP = phosphoenolpyruvate + ADP + CO2. The protein operates within carbohydrate biosynthesis; gluconeogenesis. Its function is as follows. Involved in the gluconeogenesis. Catalyzes the conversion of oxaloacetate (OAA) to phosphoenolpyruvate (PEP) through direct phosphoryl transfer between the nucleoside triphosphate and OAA. The sequence is that of Phosphoenolpyruvate carboxykinase (ATP) from Bacillus cytotoxicus (strain DSM 22905 / CIP 110041 / 391-98 / NVH 391-98).